The following is a 432-amino-acid chain: 3-phosphoshikimate 1-carboxyvinyltransferase (432 aa).

3-phosphoshikimate is bound by residues Lys-22, Ser-23, and Arg-27. Lys-22 provides a ligand contact to phosphoenolpyruvate. The phosphoenolpyruvate site is built by Gly-96 and Arg-127. Residues Ser-173, Ser-174, Gln-175, Ser-201, Asp-316, Asn-339, and Lys-343 each contribute to the 3-phosphoshikimate site. Gln-175 provides a ligand contact to phosphoenolpyruvate. The Proton acceptor role is filled by Asp-316. Phosphoenolpyruvate contacts are provided by Arg-347, Arg-391, and Lys-416.

The protein belongs to the EPSP synthase family. In terms of assembly, monomer.

The protein localises to the cytoplasm. The enzyme catalyses 3-phosphoshikimate + phosphoenolpyruvate = 5-O-(1-carboxyvinyl)-3-phosphoshikimate + phosphate. The protein operates within metabolic intermediate biosynthesis; chorismate biosynthesis; chorismate from D-erythrose 4-phosphate and phosphoenolpyruvate: step 6/7. Its function is as follows. Catalyzes the transfer of the enolpyruvyl moiety of phosphoenolpyruvate (PEP) to the 5-hydroxyl of shikimate-3-phosphate (S3P) to produce enolpyruvyl shikimate-3-phosphate and inorganic phosphate. The protein is 3-phosphoshikimate 1-carboxyvinyltransferase of Histophilus somni (strain 2336) (Haemophilus somnus).